Here is a 217-residue protein sequence, read N- to C-terminus: FMN-dependent NADH:quinone oxidoreductase (217 aa).

FMN contacts are provided by residues Ser10 and 16 to 18 (SVS).

Belongs to the azoreductase type 1 family. In terms of assembly, homodimer. FMN serves as cofactor.

It catalyses the reaction 2 a quinone + NADH + H(+) = 2 a 1,4-benzosemiquinone + NAD(+). The enzyme catalyses N,N-dimethyl-1,4-phenylenediamine + anthranilate + 2 NAD(+) = 2-(4-dimethylaminophenyl)diazenylbenzoate + 2 NADH + 2 H(+). Functionally, quinone reductase that provides resistance to thiol-specific stress caused by electrophilic quinones. In terms of biological role, also exhibits azoreductase activity. Catalyzes the reductive cleavage of the azo bond in aromatic azo compounds to the corresponding amines. The polypeptide is FMN-dependent NADH:quinone oxidoreductase (Polaromonas naphthalenivorans (strain CJ2)).